The chain runs to 180 residues: Shikimate kinase (180 aa).

Residue 14–19 coordinates ATP; that stretch reads GAGKSC. Position 18 (S18) interacts with Mg(2+). Substrate-binding residues include D36, R60, and G82. R120 contributes to the ATP binding site. R139 provides a ligand contact to substrate.

Belongs to the shikimate kinase family. In terms of assembly, monomer. Requires Mg(2+) as cofactor.

The protein localises to the cytoplasm. The enzyme catalyses shikimate + ATP = 3-phosphoshikimate + ADP + H(+). It functions in the pathway metabolic intermediate biosynthesis; chorismate biosynthesis; chorismate from D-erythrose 4-phosphate and phosphoenolpyruvate: step 5/7. Its function is as follows. Catalyzes the specific phosphorylation of the 3-hydroxyl group of shikimic acid using ATP as a cosubstrate. This is Shikimate kinase from Xanthomonas campestris pv. campestris (strain 8004).